Reading from the N-terminus, the 456-residue chain is Septin-10 (456 aa).

The region spanning 40 to 306 (QGFCFNILCV…ELYRRCKLQE (267 aa)) is the Septin-type G domain. Residues 50-57 (GETGIGKS) form a G1 motif region. GTP is bound by residues 50–57 (GETGIGKS), glycine 105, 186–194 (KADTISKSE), glycine 240, and arginine 255. The G3 motif stretch occupies residues 102-105 (NTVG). Residues 185-188 (AKAD) form a G4 motif region. At serine 418 the chain carries Phosphoserine.

It belongs to the TRAFAC class TrmE-Era-EngA-EngB-Septin-like GTPase superfamily. Septin GTPase family. Septins polymerize into heterooligomeric protein complexes that form filaments, and can associate with cellular membranes, actin filaments and microtubules. GTPase activity is required for filament formation. Interacts with ADGB. Proteolytically cleaved in vitro in a calmodulin-dependent manner.

Its subcellular location is the cytoplasm. The protein resides in the cytoskeleton. It localises to the cell projection. It is found in the cilium. The protein localises to the flagellum. In terms of biological role, filament-forming cytoskeletal GTPase. May play a role in cytokinesis (Potential). This Rattus norvegicus (Rat) protein is Septin-10.